The primary structure comprises 226 residues: Octanoyltransferase (226 aa).

The region spanning 34–212 (LAAPDVLLTL…AFSRVFGLEF (179 aa)) is the BPL/LPL catalytic domain. Residues 76–83 (RGGDVTYH), 143–145 (AIG), and 156–158 (GIA) contribute to the substrate site. The Acyl-thioester intermediate role is filled by Cys-174.

It belongs to the LipB family.

It is found in the cytoplasm. It catalyses the reaction octanoyl-[ACP] + L-lysyl-[protein] = N(6)-octanoyl-L-lysyl-[protein] + holo-[ACP] + H(+). It functions in the pathway protein modification; protein lipoylation via endogenous pathway; protein N(6)-(lipoyl)lysine from octanoyl-[acyl-carrier-protein]: step 1/2. In terms of biological role, catalyzes the transfer of endogenously produced octanoic acid from octanoyl-acyl-carrier-protein onto the lipoyl domains of lipoate-dependent enzymes. Lipoyl-ACP can also act as a substrate although octanoyl-ACP is likely to be the physiological substrate. The sequence is that of Octanoyltransferase from Thermosynechococcus vestitus (strain NIES-2133 / IAM M-273 / BP-1).